The sequence spans 404 residues: MGALKMRCQCFPLPYLSLLALLLLNLSLTRAETLWTANVNYSYVYDNKTYGEEGEIGVFGQDSPIERAAGLVVLPKSEKLYTACKDNVNFSVPSGWTGPWIALIQRGGGCTFTEKINRAAERGARAVVVYNNGIDNEVFEMSHPGTKDTVAIMIGNLKGNEIVDLIKGGMQVTMVIEVGRKHGSWINHYSIFFVSVSFFIVTAATVGYFIFYSARRWRLTRAQNKKQKRLKAEAKKAIGKLQLRTIKQGDKVLGPDGDSCAVCIEPYKPSDVVRILTCNHFFHKNCIDPWLLEHRTCPMCKCDILKSLGIAEDEEEGTSVAIPSVSSELQRSTVQITEEENHSETASSGYASVRGGDEQVDEGQHIYENTELVHEASATSIEVLPHMDNPGFESEDVHVHEMKS.

Residues 1–31 form the signal peptide; that stretch reads MGALKMRCQCFPLPYLSLLALLLLNLSLTRA. The region spanning 62-166 is the PA domain; that stretch reads DSPIERAAGL…LKGNEIVDLI (105 aa). Residues 191-211 traverse the membrane as a helical segment; sequence IFFVSVSFFIVTAATVGYFIF. Residues 260 to 301 form an RING-type; atypical zinc finger; it reads CAVCIEPYKPSDVVRILTCNHFFHKNCIDPWLLEHRTCPMCK. A disordered region spans residues 336–356; the sequence is ITEEENHSETASSGYASVRGG.

Auto-ubiquitinated. Expressed in the cement gland, cranial placodes, and the pronephros.

It is found in the endomembrane system. Its subcellular location is the cytoplasm. The protein localises to the perinuclear region. The enzyme catalyses S-ubiquitinyl-[E2 ubiquitin-conjugating enzyme]-L-cysteine + [acceptor protein]-L-lysine = [E2 ubiquitin-conjugating enzyme]-L-cysteine + N(6)-ubiquitinyl-[acceptor protein]-L-lysine.. It functions in the pathway protein modification; protein ubiquitination. Its function is as follows. E3 ubiquitin-protein ligase that catalyzes polyubiquitin chains. Converts epidermis into cement gland and neural tissue in whole embryos. In Xenopus laevis (African clawed frog), this protein is E3 ubiquitin-protein ligase RNF128 (rnf128).